We begin with the raw amino-acid sequence, 469 residues long: Probable ribonuclease FAU-1 (469 aa).

This sequence belongs to the FAU-1 family.

Functionally, probable RNase involved in rRNA stability through maturation and/or degradation of precursor rRNAs. Binds to RNA in loop regions with AU-rich sequences. The polypeptide is Probable ribonuclease FAU-1 (Ignicoccus hospitalis (strain KIN4/I / DSM 18386 / JCM 14125)).